Here is a 140-residue protein sequence, read N- to C-terminus: UPF0179 protein Msp_0996 (140 aa).

It belongs to the UPF0179 family.

The sequence is that of UPF0179 protein Msp_0996 from Methanosphaera stadtmanae (strain ATCC 43021 / DSM 3091 / JCM 11832 / MCB-3).